Consider the following 217-residue polypeptide: N-(5'-phosphoribosyl)anthranilate isomerase (217 aa).

This sequence belongs to the TrpF family.

The enzyme catalyses N-(5-phospho-beta-D-ribosyl)anthranilate = 1-(2-carboxyphenylamino)-1-deoxy-D-ribulose 5-phosphate. It participates in amino-acid biosynthesis; L-tryptophan biosynthesis; L-tryptophan from chorismate: step 3/5. This is N-(5'-phosphoribosyl)anthranilate isomerase from Chlorobium phaeovibrioides (strain DSM 265 / 1930) (Prosthecochloris vibrioformis (strain DSM 265)).